The sequence spans 400 residues: Diphosphomevalonate decarboxylase (400 aa).

Residues Tyr25–Lys28, Arg80, Ser155–Arg160, and Thr211 contribute to the (R)-5-diphosphomevalonate site.

Belongs to the diphosphomevalonate decarboxylase family. In terms of assembly, homodimer.

It is found in the cytoplasm. It carries out the reaction (R)-5-diphosphomevalonate + ATP = isopentenyl diphosphate + ADP + phosphate + CO2. It functions in the pathway steroid biosynthesis; cholesterol biosynthesis. Catalyzes the ATP dependent decarboxylation of (R)-5-diphosphomevalonate to form isopentenyl diphosphate (IPP). Functions in the mevalonate (MVA) pathway leading to isopentenyl diphosphate (IPP), a key precursor for the biosynthesis of isoprenoids and sterol synthesis. The protein is Diphosphomevalonate decarboxylase (mvd) of Danio rerio (Zebrafish).